The primary structure comprises 318 residues: L-lactate dehydrogenase (318 aa).

NAD(+)-binding positions include Val18, Asp39, Lys44, Tyr69, and Gly83 to Ala84. Residues Gln86 and Arg92 each coordinate substrate. Residues Ser105, Val122–Asn124, and Ser147 each bind NAD(+). Asn124–Asp127 contributes to the substrate binding site. Residue Asp152 to Arg155 participates in substrate binding. The active-site Proton acceptor is His179. Position 225 is a phosphotyrosine (Tyr225). Substrate is bound at residue Thr234.

The protein belongs to the LDH/MDH superfamily. LDH family. In terms of assembly, homotetramer.

It localises to the cytoplasm. The enzyme catalyses (S)-lactate + NAD(+) = pyruvate + NADH + H(+). The protein operates within fermentation; pyruvate fermentation to lactate; (S)-lactate from pyruvate: step 1/1. Functionally, catalyzes the conversion of lactate to pyruvate. The chain is L-lactate dehydrogenase from Clostridium botulinum (strain ATCC 19397 / Type A).